Reading from the N-terminus, the 462-residue chain is A-type ATP synthase subunit B (462 aa).

It belongs to the ATPase alpha/beta chains family. Has multiple subunits with at least A(3), B(3), C, D, E, F, H, I and proteolipid K(x).

The protein localises to the cell membrane. Its function is as follows. Component of the A-type ATP synthase that produces ATP from ADP in the presence of a proton gradient across the membrane. The B chain is a regulatory subunit. The polypeptide is A-type ATP synthase subunit B (Methanococcus maripaludis (strain C5 / ATCC BAA-1333)).